The chain runs to 382 residues: D-galactonate dehydratase (382 aa).

Asp-183 provides a ligand contact to Mg(2+). Catalysis depends on His-185, which acts as the Proton donor. Residues Glu-209 and Glu-235 each contribute to the Mg(2+) site. His-285 functions as the Proton acceptor in the catalytic mechanism.

The protein belongs to the mandelate racemase/muconate lactonizing enzyme family. GalD subfamily. The cofactor is Mg(2+).

The catalysed reaction is D-galactonate = 2-dehydro-3-deoxy-D-galactonate + H2O. It participates in carbohydrate acid metabolism; D-galactonate degradation; D-glyceraldehyde 3-phosphate and pyruvate from D-galactonate: step 1/3. Functionally, catalyzes the dehydration of D-galactonate to 2-keto-3-deoxy-D-galactonate. The chain is D-galactonate dehydratase from Escherichia fergusonii (strain ATCC 35469 / DSM 13698 / CCUG 18766 / IAM 14443 / JCM 21226 / LMG 7866 / NBRC 102419 / NCTC 12128 / CDC 0568-73).